The following is a 449-amino-acid chain: PC-esterase domain-containing protein 1A (449 aa).

This sequence belongs to the PC-esterase family.

The polypeptide is PC-esterase domain-containing protein 1A (Pced1a) (Mus musculus (Mouse)).